A 571-amino-acid polypeptide reads, in one-letter code: Proline--tRNA ligase (571 aa).

It belongs to the class-II aminoacyl-tRNA synthetase family. ProS type 1 subfamily. As to quaternary structure, homodimer.

It localises to the cytoplasm. It carries out the reaction tRNA(Pro) + L-proline + ATP = L-prolyl-tRNA(Pro) + AMP + diphosphate. In terms of biological role, catalyzes the attachment of proline to tRNA(Pro) in a two-step reaction: proline is first activated by ATP to form Pro-AMP and then transferred to the acceptor end of tRNA(Pro). As ProRS can inadvertently accommodate and process non-cognate amino acids such as alanine and cysteine, to avoid such errors it has two additional distinct editing activities against alanine. One activity is designated as 'pretransfer' editing and involves the tRNA(Pro)-independent hydrolysis of activated Ala-AMP. The other activity is designated 'posttransfer' editing and involves deacylation of mischarged Ala-tRNA(Pro). The misacylated Cys-tRNA(Pro) is not edited by ProRS. The chain is Proline--tRNA ligase from Pseudomonas fluorescens (strain ATCC BAA-477 / NRRL B-23932 / Pf-5).